Here is a 115-residue protein sequence, read N- to C-terminus: Succinate dehydrogenase hydrophobic membrane anchor subunit (115 aa).

The Cytoplasmic portion of the chain corresponds to 1–15; it reads MVSNASALGRNGVHD. Residues 16-36 traverse the membrane as a helical segment; that stretch reads FILVRATAIVLTLYIIYMVGF. At 37 to 58 the chain is on the periplasmic side; that stretch reads FATSGELTYEVWIGFFASAFTK. The helical transmembrane segment at 59–80 threads the bilayer; sequence VFTLLALFSILIHAWIGMWQVL. His-71 provides a ligand contact to heme. Residues 81-90 are Cytoplasmic-facing; it reads TDYVKPLALR. Tyr-83 contacts a ubiquinone. Residues 91–115 form a helical membrane-spanning segment; it reads LMLQLVIVVALVVYVIYGFVVVWGV.

In terms of assembly, part of an enzyme complex containing four subunits: a flavoprotein, an iron-sulfur protein, plus two membrane-anchoring proteins, SdhC and SdhD. The complex can form homotrimers. Heme is required as a cofactor.

Its subcellular location is the cell inner membrane. It participates in carbohydrate metabolism; tricarboxylic acid cycle. Functionally, membrane-anchoring subunit of succinate dehydrogenase (SDH). This Escherichia coli O6:H1 (strain CFT073 / ATCC 700928 / UPEC) protein is Succinate dehydrogenase hydrophobic membrane anchor subunit (sdhD).